A 204-amino-acid chain; its full sequence is N-(5'-phosphoribosyl)anthranilate isomerase (204 aa).

The protein belongs to the TrpF family.

The catalysed reaction is N-(5-phospho-beta-D-ribosyl)anthranilate = 1-(2-carboxyphenylamino)-1-deoxy-D-ribulose 5-phosphate. The protein operates within amino-acid biosynthesis; L-tryptophan biosynthesis; L-tryptophan from chorismate: step 3/5. The protein is N-(5'-phosphoribosyl)anthranilate isomerase of Bacillus cereus (strain ZK / E33L).